The sequence spans 483 residues: NADH-quinone oxidoreductase subunit N (483 aa).

Helical transmembrane passes span 11–31 (ALPE…DLFL), 37–57 (SLIY…TACT), 82–100 (LMMY…QYVS), 110–130 (FALT…QHFL), 164–184 (FVLG…LYGV), 205–225 (AVLV…LGAV), 239–259 (PTAV…AFMI), 268–288 (VLAI…ILIG), 301–321 (MLAY…MSAG), 329–349 (MFYI…MLLL), 372–392 (YAFL…TLGF), 406–426 (GFVG…FYYL), and 446–466 (PIDM…LGMF).

The protein belongs to the complex I subunit 2 family. In terms of assembly, NDH-1 is composed of 14 different subunits. Subunits NuoA, H, J, K, L, M, N constitute the membrane sector of the complex.

The protein localises to the cell inner membrane. The enzyme catalyses a quinone + NADH + 5 H(+)(in) = a quinol + NAD(+) + 4 H(+)(out). NDH-1 shuttles electrons from NADH, via FMN and iron-sulfur (Fe-S) centers, to quinones in the respiratory chain. The immediate electron acceptor for the enzyme in this species is believed to be ubiquinone. Couples the redox reaction to proton translocation (for every two electrons transferred, four hydrogen ions are translocated across the cytoplasmic membrane), and thus conserves the redox energy in a proton gradient. In Methylovorus glucosotrophus (strain SIP3-4), this protein is NADH-quinone oxidoreductase subunit N.